Consider the following 201-residue polypeptide: uncharacterized protein (201 aa).

Its function is as follows. May have a role in tissue tropism within the insect larvae. This is an uncharacterized protein from Lepidoptera (butterflies and moths).